The chain runs to 100 residues: Urease subunit gamma (100 aa).

It belongs to the urease gamma subunit family. In terms of assembly, heterotrimer of UreA (gamma), UreB (beta) and UreC (alpha) subunits. Three heterotrimers associate to form the active enzyme.

Its subcellular location is the cytoplasm. The catalysed reaction is urea + 2 H2O + H(+) = hydrogencarbonate + 2 NH4(+). The protein operates within nitrogen metabolism; urea degradation; CO(2) and NH(3) from urea (urease route): step 1/1. The protein is Urease subunit gamma of Synechococcus sp. (strain WH7805).